The chain runs to 299 residues: Glycine--tRNA ligase alpha subunit (299 aa).

The protein belongs to the class-II aminoacyl-tRNA synthetase family. Tetramer of two alpha and two beta subunits.

The protein localises to the cytoplasm. It catalyses the reaction tRNA(Gly) + glycine + ATP = glycyl-tRNA(Gly) + AMP + diphosphate. In Dichelobacter nodosus (strain VCS1703A), this protein is Glycine--tRNA ligase alpha subunit.